Reading from the N-terminus, the 193-residue chain is Rho-related GTP-binding protein RhoA-B (193 aa).

Residues 12–19, 30–37, 59–63, 117–120, and 160–162 each bind GTP; these read GDGACGKT, FPEVYVPT, DTAGQ, NKKD, and SAK. (Microbial infection) O-linked (GlcNAc) tyrosine; by Yersinia Afp18 glycosylation is present at Y34. C190 carries the cysteine methyl ester modification. C190 is lipidated: S-geranylgeranyl cysteine. The propeptide at 191 to 193 is removed in mature form; the sequence is CLL.

It belongs to the small GTPase superfamily. Rho family. Post-translationally, (Microbial infection) Glycosylated at Tyr-34 by Yersinia ruckeri toxin Afp18. Mono-O-GlcNAcylation by Afp18 inhibits RhoA activation by guanine nucleotide exchange factors and blocks RhoA signaling.

The protein localises to the cell membrane. Its function is as follows. Regulates a signal transduction pathway linking plasma membrane receptors to the assembly of focal adhesions and actin stress fibers. The protein is Rho-related GTP-binding protein RhoA-B of Danio rerio (Zebrafish).